The following is a 201-amino-acid chain: Peptide deformylase (201 aa).

Fe cation contacts are provided by cysteine 92 and histidine 134. Glutamate 135 is a catalytic residue. Residue histidine 138 coordinates Fe cation.

Belongs to the polypeptide deformylase family. It depends on Fe(2+) as a cofactor.

The catalysed reaction is N-terminal N-formyl-L-methionyl-[peptide] + H2O = N-terminal L-methionyl-[peptide] + formate. Functionally, removes the formyl group from the N-terminal Met of newly synthesized proteins. Requires at least a dipeptide for an efficient rate of reaction. N-terminal L-methionine is a prerequisite for activity but the enzyme has broad specificity at other positions. This is Peptide deformylase from Rhodopirellula baltica (strain DSM 10527 / NCIMB 13988 / SH1).